The sequence spans 62 residues: MSSVCDVCGKGPGFGMSVSHSHRRTRRRWNPNIQTVRAMVGRTPRRLNVCTSCLKAGKVTRG.

It belongs to the bacterial ribosomal protein bL28 family.

The protein is Large ribosomal subunit protein bL28 of Parafrankia sp. (strain EAN1pec).